A 331-amino-acid polypeptide reads, in one-letter code: MDRTTVVPSPASTYCSFMGGSQHSPLRRSQRLIDKENRDLQKIPPKSLSPQLFGNTEDDYSELLLQQGKVVHLKPAAKLVPVRSSDNLVHLGSRDKVVPLKTSNRIVHLKPPYKIIHLKSLDEVEKTVKKKNNIQKEVHQRNSQRRSIQCTPKKRGRKPKQPAKKLQSRISTDQLGSTPSPSKLPAKYPAHFVHQLPPAEDSSCATRRRSLSAPAMQLSDLSLTPDEIQTPERRGEIVNKSPSDLDSDVSLNFSLSDSIGEIFGTKDISSILTMQRPRQYILLEEHLPTLATMLNVDLERLRCVLDITQGLSHEQILRFPIKHEEDELEVP.

The interval Asn132 to Lys187 is disordered. A compositionally biased stretch (basic residues) spans Pro152 to Gln167. The segment covering Ser168–Pro181 has biased composition (polar residues).

Belongs to the TOP6B-like family.

Its subcellular location is the chromosome. Its function is as follows. Required for formation of the mei-W68-mediated double-strand breaks (DSBs) that initiate meiotic recombination. The sequence is that of Meiotic recombination protein P22 from Drosophila melanogaster (Fruit fly).